A 364-amino-acid polypeptide reads, in one-letter code: TD and POZ domain-containing protein 2 (364 aa).

The MATH domain maps to 19–149; the sequence is EFCYEWTISN…KDKLTLCCKV (131 aa). Positions 188–255 constitute a BTB domain; it reads TDCSLLVAGH…IYTGKAPTLH (68 aa).

This sequence belongs to the Tdpoz family.

This is TD and POZ domain-containing protein 2 from Mus musculus (Mouse).